A 328-amino-acid chain; its full sequence is Tetraacyldisaccharide 4'-kinase (328 aa).

An ATP-binding site is contributed by 55 to 62 (TAGGNGKT).

Belongs to the LpxK family.

It catalyses the reaction a lipid A disaccharide + ATP = a lipid IVA + ADP + H(+). Its pathway is glycolipid biosynthesis; lipid IV(A) biosynthesis; lipid IV(A) from (3R)-3-hydroxytetradecanoyl-[acyl-carrier-protein] and UDP-N-acetyl-alpha-D-glucosamine: step 6/6. In terms of biological role, transfers the gamma-phosphate of ATP to the 4'-position of a tetraacyldisaccharide 1-phosphate intermediate (termed DS-1-P) to form tetraacyldisaccharide 1,4'-bis-phosphate (lipid IVA). The protein is Tetraacyldisaccharide 4'-kinase of Escherichia coli O139:H28 (strain E24377A / ETEC).